The chain runs to 297 residues: tRNA dimethylallyltransferase (297 aa).

Residue 10 to 17 (GITASGKS) participates in ATP binding. Residue 12 to 17 (TASGKS) participates in substrate binding. The interaction with substrate tRNA stretch occupies residues 36-39 (DSKQ).

This sequence belongs to the IPP transferase family. Monomer. It depends on Mg(2+) as a cofactor.

It catalyses the reaction adenosine(37) in tRNA + dimethylallyl diphosphate = N(6)-dimethylallyladenosine(37) in tRNA + diphosphate. Catalyzes the transfer of a dimethylallyl group onto the adenine at position 37 in tRNAs that read codons beginning with uridine, leading to the formation of N6-(dimethylallyl)adenosine (i(6)A). The polypeptide is tRNA dimethylallyltransferase (Wolbachia pipientis wMel).